A 396-amino-acid chain; its full sequence is Probable sugar efflux transporter (396 aa).

The next 12 membrane-spanning stretches (helical) occupy residues 15–35, 50–70, 81–101, 103–123, 136–156, 170–190, 209–229, 246–266, 275–295, 299–319, 333–353, and 364–384; these read VVTL…PVGL, VGIM…PFML, LICL…SWSF, VLVI…SITA, AQAL…GLPL, FFAI…LLPL, PALM…YTAY, FATA…VIFG, ALVS…LPAA, IHLG…GLGM, VAMA…ALVG, and MIGY…IIIF.

It belongs to the major facilitator superfamily. SotB (TC 2.A.1.2) family.

Its subcellular location is the cell inner membrane. Involved in the efflux of sugars. The physiological role may be the reduction of the intracellular concentration of toxic sugars or sugar metabolites. The sequence is that of Probable sugar efflux transporter from Escherichia coli O157:H7 (strain EC4115 / EHEC).